Reading from the N-terminus, the 122-residue chain is Large ribosomal subunit protein uL18 (122 aa).

The segment covering M1–L22 has biased composition (basic residues). The disordered stretch occupies residues M1–S25.

Belongs to the universal ribosomal protein uL18 family. Part of the 50S ribosomal subunit; part of the 5S rRNA/L5/L18/L25 subcomplex. Contacts the 5S and 23S rRNAs.

Its function is as follows. This is one of the proteins that bind and probably mediate the attachment of the 5S RNA into the large ribosomal subunit, where it forms part of the central protuberance. The chain is Large ribosomal subunit protein uL18 from Rhodopirellula baltica (strain DSM 10527 / NCIMB 13988 / SH1).